The chain runs to 96 residues: Co-chaperonin GroES (96 aa).

This sequence belongs to the GroES chaperonin family. In terms of assembly, heptamer of 7 subunits arranged in a ring. Interacts with the chaperonin GroEL.

Its subcellular location is the cytoplasm. Its function is as follows. Together with the chaperonin GroEL, plays an essential role in assisting protein folding. The GroEL-GroES system forms a nano-cage that allows encapsulation of the non-native substrate proteins and provides a physical environment optimized to promote and accelerate protein folding. GroES binds to the apical surface of the GroEL ring, thereby capping the opening of the GroEL channel. This chain is Co-chaperonin GroES, found in Shewanella denitrificans (strain OS217 / ATCC BAA-1090 / DSM 15013).